The chain runs to 328 residues: Eukaryotic translation initiation factor 3 subunit I (328 aa).

WD repeat units lie at residues 8 to 49 (GHER…GTYE), 50 to 89 (GHTG…QLYK), 145 to 184 (TRES…FVES), 189 to 228 (NSGS…VIKT), and 286 to 327 (GHFG…FKYT).

This sequence belongs to the eIF-3 subunit I family. In terms of assembly, component of the eukaryotic translation initiation factor 3 (eIF-3) complex. The eIF-3 complex appears to include tif32/eif3a, SPAC25G10.08/eif3b, tif33/eif3c, SPBC4C3.07/eif3f, tif35/eif3g and sum1/eif3i. This set of common subunits may also associate exclusively with either moe1/eif3d and int6/eif3e, or with SPAC821.05/eif3h and SPAC1751.03/eif3m. The eIF-3 complex may also include SPAC3A12.13c/eif3j.

Its subcellular location is the cytoplasm. The protein resides in the nucleus. In terms of biological role, component of the eukaryotic translation initiation factor 3 (eIF-3) complex, which is involved in protein synthesis of a specialized repertoire of mRNAs and, together with other initiation factors, stimulates binding of mRNA and methionyl-tRNAi to the 40S ribosome. The eIF-3 complex specifically targets and initiates translation of a subset of mRNAs involved in cell proliferation. The sequence is that of Eukaryotic translation initiation factor 3 subunit I (sum1) from Schizosaccharomyces pombe (strain 972 / ATCC 24843) (Fission yeast).